The primary structure comprises 113 residues: MVLRRHKLLAQQRWLRVKFSDRSGRVFTLKNRNQLSIIMPFCVLHICFPLYKVTLECNLSNLLPHFSVSGLVNPFASKVLSEYFSFLSNNCTNILPILHLRLFYNIRCLGKQF.

This is an uncharacterized protein from Saccharomyces cerevisiae (strain ATCC 204508 / S288c) (Baker's yeast).